Here is a 247-residue protein sequence, read N- to C-terminus: 5'-nucleotidase SurE (247 aa).

The a divalent metal cation site is built by aspartate 8, aspartate 9, serine 39, and asparagine 91.

Belongs to the SurE nucleotidase family. It depends on a divalent metal cation as a cofactor.

The protein localises to the cytoplasm. The enzyme catalyses a ribonucleoside 5'-phosphate + H2O = a ribonucleoside + phosphate. Nucleotidase that shows phosphatase activity on nucleoside 5'-monophosphates. The sequence is that of 5'-nucleotidase SurE from Chromobacterium violaceum (strain ATCC 12472 / DSM 30191 / JCM 1249 / CCUG 213 / NBRC 12614 / NCIMB 9131 / NCTC 9757 / MK).